The primary structure comprises 302 residues: uncharacterized protein (302 aa).

Helical transmembrane passes span isoleucine 3–phenylalanine 23, phenylalanine 39–alanine 59, serine 77–valine 97, leucine 106–isoleucine 126, glycine 128–alanine 148, phenylalanine 163–valine 183, valine 199–alanine 219, glycine 227–valine 247, and leucine 254–phenylalanine 274.

The protein belongs to the Ca(2+):cation antiporter (CaCA) (TC 2.A.19) family.

The protein localises to the cell membrane. This is an uncharacterized protein from Methanocaldococcus jannaschii (strain ATCC 43067 / DSM 2661 / JAL-1 / JCM 10045 / NBRC 100440) (Methanococcus jannaschii).